The following is a 396-amino-acid chain: MDSIVQDAIDEAEESEDSASEPADVAGGGGDTVPTGTMTDNELEDVLQELQTNITVVGCGGAGSNTVDRMATEGIHGADLVAANTDVQHLVDIEADTKILMGQQKTKGRGAGSLPQVGEEAAIESQGEIRDSIAGSDMVFVTAGLGGGTGTGSAPVVAKAAREQGALTIAIVTTPFTAEGEVRRTNAEAGLERLRDVADTVIVVPNDRLLDSVGKLPVREAFKVSDEVLMRSVKGITELITKPGLVNLDFADVRTVMEKGGVAMIGLGEADSDAKAADSVQSALRSPLLDVDISSANSALVNVTGGPGMSIEEAEGVVEQLYDRIDPDARIIWGTSIDEQIQEEMRTMVVVTGVDSPQIYGRNEAAEGDGPAQESTPEPEPEPQAGSEIEDIDYVE.

The tract at residues 1 to 38 (MDSIVQDAIDEAEESEDSASEPADVAGGGGDTVPTGTM) is disordered. A compositionally biased stretch (acidic residues) spans 8–19 (AIDEAEESEDSA). Residues 61 to 65 (GAGSN), 148 to 150 (GTG), glutamate 179, arginine 183, and aspartate 226 each bind GTP. The interval 358 to 396 (QIYGRNEAAEGDGPAQESTPEPEPEPQAGSEIEDIDYVE) is disordered.

It belongs to the FtsZ family. In terms of assembly, homodimer. Polymerizes to form a dynamic ring structure in a strictly GTP-dependent manner. Interacts directly with several other division proteins.

The protein localises to the cytoplasm. In terms of biological role, essential cell division protein that forms a contractile ring structure (Z ring) at the future cell division site. The regulation of the ring assembly controls the timing and the location of cell division. One of the functions of the FtsZ ring is to recruit other cell division proteins to the septum to produce a new cell wall between the dividing cells. Binds GTP and shows GTPase activity. The protein is Cell division protein FtsZ 1 of Halobacterium salinarum (strain ATCC 29341 / DSM 671 / R1).